Reading from the N-terminus, the 130-residue chain is Small ribosomal subunit protein uS11 (130 aa).

The protein belongs to the universal ribosomal protein uS11 family. As to quaternary structure, part of the 30S ribosomal subunit. Interacts with proteins S7 and S18. Binds to IF-3.

Located on the platform of the 30S subunit, it bridges several disparate RNA helices of the 16S rRNA. Forms part of the Shine-Dalgarno cleft in the 70S ribosome. This Syntrophobacter fumaroxidans (strain DSM 10017 / MPOB) protein is Small ribosomal subunit protein uS11.